A 240-amino-acid chain; its full sequence is LOB domain-containing protein 39 (240 aa).

In terms of domain architecture, LOB spans 1 to 107; sequence MSCNGCRVLR…VETVLRGGTL (107 aa). The tract at residues 200-233 is disordered; sequence GDRPGSPSEESVTTSCWENGMRGDNKQKRNKGEK. A compositionally biased stretch (polar residues) spans 207–216; it reads SEESVTTSCW.

This sequence belongs to the LOB domain-containing protein family. Expressed in young shoots, roots, stems, leaves and flowers.

The sequence is that of LOB domain-containing protein 39 (LBD39) from Arabidopsis thaliana (Mouse-ear cress).